We begin with the raw amino-acid sequence, 311 residues long: DNA repair and recombination protein RadA (311 aa).

Residue Gly-104–Ser-111 coordinates ATP.

It belongs to the eukaryotic RecA-like protein family.

In terms of biological role, involved in DNA repair and in homologous recombination. Binds and assemble on single-stranded DNA to form a nucleoprotein filament. Hydrolyzes ATP in a ssDNA-dependent manner and promotes DNA strand exchange between homologous DNA molecules. This Methanobrevibacter smithii (strain ATCC 35061 / DSM 861 / OCM 144 / PS) protein is DNA repair and recombination protein RadA.